Consider the following 177-residue polypeptide: Bifunctional protein PyrR (177 aa).

The short motif at 97–109 is the PRPP-binding element; it reads IILVDDVLYTGRT.

The protein belongs to the purine/pyrimidine phosphoribosyltransferase family. PyrR subfamily.

The enzyme catalyses UMP + diphosphate = 5-phospho-alpha-D-ribose 1-diphosphate + uracil. Functionally, regulates the transcription of the pyrimidine nucleotide (pyr) operon in response to exogenous pyrimidines. In terms of biological role, also displays a weak uracil phosphoribosyltransferase activity which is not physiologically significant. This is Bifunctional protein PyrR from Nitrosococcus oceani (strain ATCC 19707 / BCRC 17464 / JCM 30415 / NCIMB 11848 / C-107).